Here is a 352-residue protein sequence, read N- to C-terminus: Zona pellucida-binding protein 2 (352 aa).

A signal peptide spans 1-28 (MAGGGGRPCSPQRALLGMVAIMAVVAEA). N-linked (GlcNAc...) asparagine glycosylation is found at Asn110 and Asn309.

It belongs to the zona pellucida-binding protein Sp38 family.

It is found in the secreted. The protein localises to the cytoplasmic vesicle. It localises to the secretory vesicle. The protein resides in the acrosome. Its function is as follows. May be implicated in the gamete interaction during fertilization. This Gallus gallus (Chicken) protein is Zona pellucida-binding protein 2 (ZPBP2).